The following is a 462-amino-acid chain: NAD(P) transhydrogenase subunit beta (462 aa).

Topologically, residues 1–3 (MSG) are periplasmic. The chain crosses the membrane as a helical span at residues 4–24 (GLVTAAYIVAAILFIFSLAGL). The Cytoplasmic portion of the chain corresponds to 25–45 (SKHETSRQGNNFGIAGMAIAL). Residues 46–66 (IATIFGPDTGNVGWILLAMVI) traverse the membrane as a helical segment. At 67–82 (GGAIGIRLAKKVEMTE) the chain is on the periplasmic side. The helical transmembrane segment at 83 to 103 (MPELVAILHSFVGLAAVLVGF) threads the bilayer. Residues 104–115 (NSYLHHDAGMAP) lie on the Cytoplasmic side of the membrane. The helical transmembrane segment at 116 to 136 (ILVNIHLTEVFLGIFIGAVTF) threads the bilayer. Over 137–164 (TGSVVAFGKLCGKISSKPLMLPNRHKMN) the chain is Periplasmic. A helical transmembrane segment spans residues 165–185 (LAALVVSFLLLIVFVRTDSVG). At 186–188 (LQV) the chain is on the cytoplasmic side. The chain crosses the membrane as a helical span at residues 189-209 (LALLIMTAIALVFGWHLVASI). At 210–215 (GGADMP) the chain is on the periplasmic side. The chain crosses the membrane as a helical span at residues 216–236 (VVVSMLNSYSGWAAAAAGFML). Residues 237–239 (SND) are Cytoplasmic-facing. A helical transmembrane segment spans residues 240 to 260 (LLIVTGALVGSSGAILSYIMC). At 261-308 (KAMNRSFISVIAGGFGTDGSSTGDDQEVGEHREITAEETAELLKNSHS) the chain is on the periplasmic side. The chain crosses the membrane as a helical span at residues 309–329 (VIITPGYGMAVAQAQYPVAEI). The Cytoplasmic portion of the chain corresponds to 330-462 (TEKLRARGIN…ASVDAILKAL (133 aa)).

Belongs to the PNT beta subunit family. Heterodimer of an alpha and a beta chain.

It localises to the cell inner membrane. The catalysed reaction is NAD(+) + NADPH + H(+)(in) = NADH + NADP(+) + H(+)(out). In terms of biological role, the transhydrogenation between NADH and NADP is coupled to respiration and ATP hydrolysis and functions as a proton pump across the membrane. The chain is NAD(P) transhydrogenase subunit beta (pntB) from Escherichia coli O157:H7.